The chain runs to 207 residues: dTTP/UTP pyrophosphatase (207 aa).

The Proton acceptor role is filled by Asp-87.

It belongs to the Maf family. YhdE subfamily. A divalent metal cation is required as a cofactor.

The protein resides in the cytoplasm. The catalysed reaction is dTTP + H2O = dTMP + diphosphate + H(+). It catalyses the reaction UTP + H2O = UMP + diphosphate + H(+). In terms of biological role, nucleoside triphosphate pyrophosphatase that hydrolyzes dTTP and UTP. May have a dual role in cell division arrest and in preventing the incorporation of modified nucleotides into cellular nucleic acids. This Ralstonia nicotianae (strain ATCC BAA-1114 / GMI1000) (Ralstonia solanacearum) protein is dTTP/UTP pyrophosphatase.